A 586-amino-acid chain; its full sequence is Eukaryotic translation initiation factor 3 subunit D (586 aa).

Residues 107 to 154 form a disordered region; that stretch reads FGRGGGTVFRGRAQRGGAGQRGGRAGFQRVGAGRGQGGDRYYDNRGAR. The segment covering 108–131 has biased composition (gly residues); it reads GRGGGTVFRGRAQRGGAGQRGGRA. The segment at 301–315 is RNA gate; it reads SLDLVTVNENAADAP. Residues 566 to 577 show a composition bias toward acidic residues; sequence FEEDDEAAEEEQ. Positions 566-586 are disordered; sequence FEEDDEAAEEEQEAKGEVEEA.

Belongs to the eIF-3 subunit D family. Component of the eukaryotic translation initiation factor 3 (eIF-3) complex.

The protein localises to the cytoplasm. MRNA cap-binding component of the eukaryotic translation initiation factor 3 (eIF-3) complex, which is involved in protein synthesis of a specialized repertoire of mRNAs and, together with other initiation factors, stimulates binding of mRNA and methionyl-tRNAi to the 40S ribosome. The eIF-3 complex specifically targets and initiates translation of a subset of mRNAs involved in cell proliferation. In the eIF-3 complex, eif3d specifically recognizes and binds the 7-methylguanosine cap of a subset of mRNAs. This chain is Eukaryotic translation initiation factor 3 subunit D, found in Emericella nidulans (strain FGSC A4 / ATCC 38163 / CBS 112.46 / NRRL 194 / M139) (Aspergillus nidulans).